The primary structure comprises 560 residues: Membrane protein insertase YidC (560 aa).

A run of 6 helical transmembrane segments spans residues 5 to 25 (IINL…WQYF), 334 to 354 (AIDF…MNFF), 357 to 377 (YVGN…LLMF), 431 to 451 (LPIL…YVTI), 476 to 496 (LFGL…WPIL), and 522 to 542 (FMPL…LIYW).

The protein belongs to the OXA1/ALB3/YidC family. Type 1 subfamily. As to quaternary structure, interacts with the Sec translocase complex via SecD. Specifically interacts with transmembrane segments of nascent integral membrane proteins during membrane integration.

Its subcellular location is the cell inner membrane. Required for the insertion and/or proper folding and/or complex formation of integral membrane proteins into the membrane. Involved in integration of membrane proteins that insert both dependently and independently of the Sec translocase complex, as well as at least some lipoproteins. Aids folding of multispanning membrane proteins. The chain is Membrane protein insertase YidC from Rickettsia africae (strain ESF-5).